The primary structure comprises 196 residues: Thymidine kinase (196 aa).

Position 17–24 (17–24) interacts with ATP; the sequence is GPMFAGKT. Glu-92 acts as the Proton acceptor in catalysis. Substrate is bound at residue Phe-121. Zn(2+) is bound by residues Cys-146 and Cys-149. 166-170 provides a ligand contact to substrate; the sequence is LILAG. The Zn(2+) site is built by Cys-179 and Cys-182.

Belongs to the thymidine kinase family.

The enzyme catalyses thymidine + ATP = dTMP + ADP + H(+). Its function is as follows. Phosphorylates thymidine. ASFV replicates in the cytoplasm of infected cells and contains genes encoding a number of enzymes needed for DNA synthesis, including thymidine kinase. Important for growth in swine macrophages in vitro and is a virus virulence factor in swine. This African swine fever virus (strain Badajoz 1971 Vero-adapted) (Ba71V) protein is Thymidine kinase.